A 97-amino-acid polypeptide reads, in one-letter code: Large ribosomal subunit protein uL23 (97 aa).

The protein belongs to the universal ribosomal protein uL23 family. Part of the 50S ribosomal subunit. Contacts protein L29, and trigger factor when it is bound to the ribosome.

One of the early assembly proteins it binds 23S rRNA. One of the proteins that surrounds the polypeptide exit tunnel on the outside of the ribosome. Forms the main docking site for trigger factor binding to the ribosome. The polypeptide is Large ribosomal subunit protein uL23 (Brachyspira hyodysenteriae (strain ATCC 49526 / WA1)).